The sequence spans 806 residues: Volume-regulated anion channel subunit LRRC8E (806 aa).

The Cytoplasmic portion of the chain corresponds to 1 to 22 (MIPVAEFKQFTEQQPAFKVLKP). The helical transmembrane segment at 23 to 43 (WWDVLAEYITYAMLMIGVFGC) threads the bilayer. Residues 44-130 (TLQVTQDKII…YETALHWYAK (87 aa)) lie on the Extracellular side of the membrane. Cys-54 and Cys-311 are joined by a disulfide. N-linked (GlcNAc...) asparagine glycans are attached at residues Asn-57 and Asn-80. Positions 75-104 (QSSASNDSDLETTVPPPTATSSPPREMSGL) are disordered. Residues 131–151 (YFPYLVVIHTLIFIICGNFWF) traverse the membrane as a helical segment. At 152–275 (KFPGTSSKIE…MRQTVLKVCK (124 aa)) the chain is on the cytoplasmic side. A disordered region spans residues 182-217 (EVSGESSQEKPNQERSIDRELSKPNFEEGSPATADL). Residues 188-207 (SQEKPNQERSIDRELSKPNF) show a composition bias toward basic and acidic residues. Residues 276 to 296 (FVLITIYNAVLVGKIHFIVPC) traverse the membrane as a helical segment. Residues 297–323 (SVHTEDMTGYNSFCCNHTKAHLFSKLA) are Extracellular-facing. Residue Asn-312 is glycosylated (N-linked (GlcNAc...) asparagine). Residues 324–344 (ISYLCFLGVYGLTCFYTLYWL) form a helical membrane-spanning segment. The Cytoplasmic segment spans residues 345-806 (FRRPLKEYSF…VDVRDKFKED (462 aa)). LRR repeat units lie at residues 569-589 (HLQK…NALK), 593-614 (LVKE…VFSL), 616-637 (NLQV…ISLQ), 641-662 (KLSV…IRKL), 664-685 (GLEE…LFLC), 687-708 (KLRH…IGVL), 710-731 (LLQY…LFFC), 733-754 (KLKT…VGSL), and 756-777 (CLVK…IGNC).

Belongs to the LRRC8 family. Heterohexamer; oligomerizes with other LRRC8 proteins (lrrc8a, lrrc8c, lrrc8d and/or lrrc8b) to form a heterohexamer. Detected in a channel complex that contains lrrc8a, lrrc8c and lrrc8e. In vivo, the subunit composition may depend primarily on expression levels, and heterooligomeric channels containing various proportions of the different LRRC8 proteins may coexist.

The protein localises to the cell membrane. Its subcellular location is the endoplasmic reticulum membrane. It localises to the lysosome membrane. The catalysed reaction is chloride(in) = chloride(out). It catalyses the reaction iodide(out) = iodide(in). The enzyme catalyses taurine(out) = taurine(in). It carries out the reaction 2',3'-cGAMP(out) = 2',3'-cGAMP(in). Non-essential component of the volume-regulated anion channel (VRAC, also named VSOAC channel), an anion channel required to maintain a constant cell volume in response to extracellular or intracellular osmotic changes. The VRAC channel conducts iodide better than chloride and can also conduct organic osmolytes like taurine. Mediates efflux of amino acids, such as aspartate, in response to osmotic stress. The VRAC channel also mediates transport of immunoreactive cyclic dinucleotide GMP-AMP (2'-3'-cGAMP), an immune messenger produced in response to DNA virus in the cytosol. Channel activity requires lrrc8a plus at least one other family member (lrrc8b, lrrc8c, lrrc8d or lrrc8e); channel characteristics depend on the precise subunit composition. Also plays a role in lysosome homeostasis by forming functional lysosomal VRAC channels in response to low cytoplasmic ionic strength condition: lysosomal VRAC channels are necessary for the formation of large lysosome-derived vacuoles, which store and then expel excess water to maintain cytosolic water homeostasis. The chain is Volume-regulated anion channel subunit LRRC8E from Xenopus laevis (African clawed frog).